Here is a 610-residue protein sequence, read N- to C-terminus: WD repeat-containing protein 46 (610 aa).

The disordered stretch occupies residues 1–103 (METAPKPGKD…TQDPFPGPAP (103 aa)). The segment covering 7–19 (PGKDVPPKKDKLQ) has biased composition (basic and acidic residues). Serine 41 carries the phosphoserine modification. The segment covering 65–77 (KKSRISKKPQVPK) has biased composition (basic residues). WD repeat units lie at residues 193-234 (LRQF…CEIN), 235-272 (VMEAVRDIRFLHSEALLAVAQNRWLHIYDNQGIELHCI), 274-312 (RCDRVTRLEFLPFHFLLATASETGFLTYLDVSVGKIVAA), 315-354 (ARAGRLDVMSQNPYNAVIHLGHSNGTVSLWSPAMKEPLAK), 357-396 (CHRGGVRAVAVDSTGTYMATSGLDHQLKIFDLRGTYQPLS), and 399-436 (TLPHGAGHLAFSQRGLLVAGMGDVVNIWAGQGKASPPS). Residues 538–610 (ERLGYDPQAK…RPSALDRFVR (73 aa)) are disordered. Residues 572–582 (VMDEEHRDKVR) show a composition bias toward basic and acidic residues.

As to quaternary structure, part of the small subunit (SSU) processome, composed of more than 70 proteins and the RNA chaperone small nucleolar RNA (snoRNA) U3. Interacts with DDX21, NCL, NOP2 and EBNA1BP2.

It is found in the nucleus. The protein localises to the nucleolus. Functionally, scaffold component of the nucleolar structure. Required for localization of DDX21 and NCL to the granular compartment of the nucleolus. Part of the small subunit (SSU) processome, first precursor of the small eukaryotic ribosomal subunit. During the assembly of the SSU processome in the nucleolus, many ribosome biogenesis factors, an RNA chaperone and ribosomal proteins associate with the nascent pre-rRNA and work in concert to generate RNA folding, modifications, rearrangements and cleavage as well as targeted degradation of pre-ribosomal RNA by the RNA exosome. This chain is WD repeat-containing protein 46 (WDR46), found in Homo sapiens (Human).